A 54-amino-acid chain; its full sequence is Ovomucoid (54 aa).

The Kazal-like domain maps to 4–54; that stretch reads VDCSGYPTHACTLELKPLCGSDNQTYSNKCGFCNAVAQSNGTLTLSHFGKC. 3 disulfide bridges follow: C6/C36, C14/C33, and C22/C54. N-linked (GlcNAc...) asparagine glycosylation is present at N43.

Its subcellular location is the secreted. The chain is Ovomucoid from Leipoa ocellata (Malleefowl).